Consider the following 63-residue polypeptide: Hyphancin-3D (63 aa).

Positions 1-22 (MNFSRIIFLVFACFVALASVSA) are cleaved as a signal peptide. Residues 23–26 (APEP) constitute a propeptide, removed by a dipeptidylpeptidase. Leu-61 is modified (leucine amide).

The protein belongs to the cecropin family.

The protein resides in the secreted. Functionally, has antibacterial activity. This Hyphantria cunea (Fall webworm moth) protein is Hyphancin-3D.